Here is a 487-residue protein sequence, read N- to C-terminus: Protein DETOXIFICATION 11 (487 aa).

Transmembrane regions (helical) follow at residues 35–55 (LICF…LQII), 73–93 (FAIS…SCAL), 122–142 (LVCL…VILG), 151–171 (AGRF…LQPL), 184–204 (LLIT…LLVY), 211–231 (IGGA…LGSF), 264–284 (AAML…SGLL), 293–313 (VLSV…AIAA), 330–350 (AAHI…LMVG), 377–397 (MAPL…LSGV), 412–432 (FGAF…WVHL), and 435–455 (VGLW…LALV).

Belongs to the multi antimicrobial extrusion (MATE) (TC 2.A.66.1) family.

Its subcellular location is the membrane. The polypeptide is Protein DETOXIFICATION 11 (Arabidopsis thaliana (Mouse-ear cress)).